Reading from the N-terminus, the 277-residue chain is Large ribosomal subunit protein uL2 (277 aa).

Disordered regions lie at residues 36–55 (PLPK…RHHG) and 213–277 (WKGI…RKKK).

Belongs to the universal ribosomal protein uL2 family. Part of the 50S ribosomal subunit. Forms a bridge to the 30S subunit in the 70S ribosome.

One of the primary rRNA binding proteins. Required for association of the 30S and 50S subunits to form the 70S ribosome, for tRNA binding and peptide bond formation. It has been suggested to have peptidyltransferase activity; this is somewhat controversial. Makes several contacts with the 16S rRNA in the 70S ribosome. This is Large ribosomal subunit protein uL2 from Staphylococcus aureus (strain bovine RF122 / ET3-1).